The chain runs to 174 residues: Protein FanG (174 aa).

An N-terminal signal peptide occupies residues 1–21 (MKKLYKAITVICILMSNLQSA). C41 and C75 form a disulfide bridge.

The protein resides in the fimbrium. Its function is as follows. Involved in the biosynthesis of K99 fimbriae. In Escherichia coli, this protein is Protein FanG (fanG).